The primary structure comprises 282 residues: Purine nucleoside phosphorylase (282 aa).

Residues Ser46, His78, and 103–105 (RTH) each bind phosphate. Residue Glu204 is part of the active site. Glu204 lines the a purine D-ribonucleoside pocket. Ser223 provides a ligand contact to phosphate. Residue Asn246 coordinates a purine D-ribonucleoside.

It belongs to the PNP/MTAP phosphorylase family. As to quaternary structure, homotrimer.

It catalyses the reaction a purine 2'-deoxy-D-ribonucleoside + phosphate = a purine nucleobase + 2-deoxy-alpha-D-ribose 1-phosphate. Its pathway is purine metabolism; purine nucleoside salvage. Its function is as follows. The purine nucleoside phosphorylases catalyze the phosphorolytic breakdown of the N-glycosidic bond in the beta-(deoxy)ribonucleoside molecules, with the formation of the corresponding free purine bases and pentose-1-phosphate. Cleaves guanosine, inosine, 2'-deoxyguanosine and 2'-deoxyinosine. This is Purine nucleoside phosphorylase (punA) from Cellulomonas sp.